The following is a 671-amino-acid chain: Spartin (671 aa).

Position 1 is an N-acetylmethionine (Met-1). The region spanning 16-94 is the MIT domain; sequence IKEAYEKAFM…LQNVRTRLEI (79 aa). The disordered stretch occupies residues 110 to 175; that stretch reads VPKLYPEFPP…CPAEAPPAYS (66 aa). The segment covering 118 to 128 has biased composition (basic and acidic residues); sequence PPKDACKKSPE. Position 126 is a phosphoserine (Ser-126). Low complexity predominate over residues 143–158; sequence GSASAACAGPSGAPSA. Residues 159 to 174 show a composition bias toward pro residues; sequence LPVPSPSCPAEAPPAY. Residues 190–385 are ubiquitin-binding region (UBR) domain; the sequence is DSGEFSSVGE…SIDQGSKDAR (196 aa). An LC3-interacting region (LIR); mediates interaction with MAP1LC3A AND MAP1LC3C motif is present at residues 193 to 200; that stretch reads EFSSVGED. The disordered stretch occupies residues 346–421; it reads FQIPGRSSHP…SSEEKSKELP (76 aa). Lys-360 participates in a covalent cross-link: Glycyl lysine isopeptide (Lys-Gly) (interchain with G-Cter in ubiquitin). Residues 369–379 are compositionally biased toward low complexity; the sequence is QSSSSGSSIDQ. A compositionally biased stretch (basic residues) spans 384–393; sequence ARHKGKRGKK. In terms of domain architecture, Senescence spans 431–615; it reads ILSGASWVSW…YNIDNIGIKA (185 aa). Residues 435-507 are required for localization to lipid droplets; that stretch reads ASWVSWGLVK…LVDGVCTVAN (73 aa). Ser-474 carries the phosphoserine modification. Positions 635-671 are disordered; sequence VERPQRESQGGATSTEGRRDIGKQVEEEKPGAGKKDK. The segment covering 650–671 has biased composition (basic and acidic residues); that stretch reads EGRRDIGKQVEEEKPGAGKKDK.

As to quaternary structure, interacts with ITCH and WWP1. Interacts (via MIT domain) with IST1; leading to the recruitment of SPART to midbodies. Interacts with MAP1LC3A and MAP1LC3C. Ubiquitinated; ubiquitination does not require ITCH and WWP1. Brain (at protein level).

It localises to the cytoplasm. The protein localises to the midbody. Its subcellular location is the lipid droplet. Lipophagy receptor that plays an important role in lipid droplet (LD) turnover in motor neurons. Localizes to LDs and interacts with components of the autophagy machinery, such as MAP1LC3A/C proteins to deliver LDs to autophagosomes for degradation via lipophagy. Lipid transfer protein required for lipid droplet degradation, including by lipophagy. Can bind and transfer all lipid species found in lipid droplets, from phospholipids to triglycerides and sterol esters but the direction of lipid transfer by spartin and its cargos are unknown. May be implicated in endosomal trafficking, or microtubule dynamics, or both. Participates in cytokinesis. The chain is Spartin from Mus musculus (Mouse).